The primary structure comprises 871 residues: Alanine--tRNA ligase (871 aa).

Zn(2+)-binding residues include histidine 561, histidine 565, cysteine 662, and histidine 666.

Belongs to the class-II aminoacyl-tRNA synthetase family. Requires Zn(2+) as cofactor.

The protein localises to the cytoplasm. It carries out the reaction tRNA(Ala) + L-alanine + ATP = L-alanyl-tRNA(Ala) + AMP + diphosphate. Catalyzes the attachment of alanine to tRNA(Ala) in a two-step reaction: alanine is first activated by ATP to form Ala-AMP and then transferred to the acceptor end of tRNA(Ala). Also edits incorrectly charged Ser-tRNA(Ala) and Gly-tRNA(Ala) via its editing domain. This Dechloromonas aromatica (strain RCB) protein is Alanine--tRNA ligase.